A 235-amino-acid polypeptide reads, in one-letter code: Sugar fermentation stimulation protein homolog (235 aa).

Belongs to the SfsA family.

This is Sugar fermentation stimulation protein homolog from Roseobacter denitrificans (strain ATCC 33942 / OCh 114) (Erythrobacter sp. (strain OCh 114)).